Here is a 637-residue protein sequence, read N- to C-terminus: 1-deoxy-D-xylulose-5-phosphate synthase (637 aa).

Thiamine diphosphate contacts are provided by residues histidine 73 and 113 to 115; that span reads SHA. Residue aspartate 145 coordinates Mg(2+). Thiamine diphosphate is bound by residues 146–147, asparagine 175, tyrosine 286, and glutamate 367; that span reads GA. Position 175 (asparagine 175) interacts with Mg(2+).

The protein belongs to the transketolase family. DXPS subfamily. As to quaternary structure, homodimer. Mg(2+) serves as cofactor. The cofactor is thiamine diphosphate.

The catalysed reaction is D-glyceraldehyde 3-phosphate + pyruvate + H(+) = 1-deoxy-D-xylulose 5-phosphate + CO2. It participates in metabolic intermediate biosynthesis; 1-deoxy-D-xylulose 5-phosphate biosynthesis; 1-deoxy-D-xylulose 5-phosphate from D-glyceraldehyde 3-phosphate and pyruvate: step 1/1. In terms of biological role, catalyzes the acyloin condensation reaction between C atoms 2 and 3 of pyruvate and glyceraldehyde 3-phosphate to yield 1-deoxy-D-xylulose-5-phosphate (DXP). The polypeptide is 1-deoxy-D-xylulose-5-phosphate synthase (Thermobifida fusca (strain YX)).